The chain runs to 109 residues: Flagellar hook-basal body complex protein FliE (109 aa).

It belongs to the FliE family.

Its subcellular location is the bacterial flagellum basal body. This Nitrosomonas eutropha (strain DSM 101675 / C91 / Nm57) protein is Flagellar hook-basal body complex protein FliE.